The following is a 232-amino-acid chain: Histone H1A (232 aa).

Over residues 1–18 (MSDPAVEVTPAVPVASPA) the composition is skewed to low complexity. Disordered stretches follow at residues 1-42 (MSDP…THLP) and 98-232 (LQTK…AKKA). Residues 39–113 (THLPVSDMVV…GASGSFKLPA (75 aa)) form the H15 domain. Basic residues-rich tracts occupy residues 131–141 (KPKKAAAPKPK), 147–173 (KVKKTIAKKPKAATATKIKKPVAKTTK), 181–214 (AAKKAAPKPKAAPKPKAAKKETKPKKAAAPKAKK), and 222–232 (KAAKKPAAKKA).

This sequence belongs to the histone H1/H5 family.

The protein localises to the nucleus. Its subcellular location is the chromosome. Histones H1 are necessary for the condensation of nucleosome chains into higher-order structures. In Chironomus tentans (Midge), this protein is Histone H1A.